The primary structure comprises 185 residues: Large ribosomal subunit protein uL6 (185 aa).

Belongs to the universal ribosomal protein uL6 family. As to quaternary structure, part of the 50S ribosomal subunit.

Functionally, this protein binds to the 23S rRNA, and is important in its secondary structure. It is located near the subunit interface in the base of the L7/L12 stalk, and near the tRNA binding site of the peptidyltransferase center. In Staphylothermus marinus (strain ATCC 43588 / DSM 3639 / JCM 9404 / F1), this protein is Large ribosomal subunit protein uL6.